Consider the following 203-residue polypeptide: LexA repressor (203 aa).

The H-T-H motif DNA-binding region spans 28 to 47; it reads IREIGDEFGITAKGAYDHLK. Catalysis depends on for autocatalytic cleavage activity residues Ser-127 and Lys-164.

Belongs to the peptidase S24 family. Homodimer.

It carries out the reaction Hydrolysis of Ala-|-Gly bond in repressor LexA.. Represses a number of genes involved in the response to DNA damage (SOS response), including recA and lexA. In the presence of single-stranded DNA, RecA interacts with LexA causing an autocatalytic cleavage which disrupts the DNA-binding part of LexA, leading to derepression of the SOS regulon and eventually DNA repair. This is LexA repressor from Leptospira borgpetersenii serovar Hardjo-bovis (strain JB197).